A 168-amino-acid chain; its full sequence is uncharacterized protein (168 aa).

Residues 1-29 (MGWRFPSPSPRQASPVAPLLAAPTAVRSC) constitute a mitochondrion transit peptide. The segment covering 98–110 (GETKARRAREEGK) has biased composition (basic and acidic residues). Positions 98-152 (GETKARRAREEGKLPSLGNAPAPRRRSVAWPAAEGSCAAPESSPPASEASLPAPE) are disordered. Over residues 128 to 152 (PAAEGSCAAPESSPPASEASLPAPE) the composition is skewed to low complexity.

The protein resides in the mitochondrion. This is an uncharacterized protein from Homo sapiens (Human).